A 433-amino-acid chain; its full sequence is Xylose isomerase (433 aa).

Residues His-99 and Asp-102 contribute to the active site. Residues Glu-230, Glu-266, His-269, Asp-294, Asp-305, Asp-307, and Asp-337 each coordinate Mg(2+).

Belongs to the xylose isomerase family. As to quaternary structure, homotetramer. Mg(2+) is required as a cofactor.

It is found in the cytoplasm. It carries out the reaction alpha-D-xylose = alpha-D-xylulofuranose. The protein is Xylose isomerase of Cereibacter sphaeroides (strain ATCC 17029 / ATH 2.4.9) (Rhodobacter sphaeroides).